Consider the following 1128-residue polypeptide: Major DNA-binding protein (1128 aa).

The tract at residues 1104 to 1128 is required for nuclear localization; sequence LGGGGQGSGGRRKRRLATVLPGLEV.

The protein belongs to the herpesviridae major DNA-binding protein family. As to quaternary structure, homooligomers. Forms double-helical filaments necessary for the formation of replication compartments within the host nucleus. Interacts with the origin-binding protein. Interacts with the helicase primase complex; this interaction stimulates primer synthesis activity of the helicase-primase complex. Interacts with the DNA polymerase. Interacts with the alkaline exonuclease; this interaction increases its nuclease processivity.

It is found in the virion tegument. The protein resides in the host nucleus. Plays several crucial roles in viral infection. Participates in the opening of the viral DNA origin to initiate replication by interacting with the origin-binding protein. May disrupt loops, hairpins and other secondary structures present on ssDNA to reduce and eliminate pausing of viral DNA polymerase at specific sites during elongation. Promotes viral DNA recombination by performing strand-transfer, characterized by the ability to transfer a DNA strand from a linear duplex to a complementary single-stranded DNA circle. Can also catalyze the renaturation of complementary single strands. Additionally, reorganizes the host cell nucleus, leading to the formation of prereplicative sites and replication compartments. This process is driven by the protein which can form double-helical filaments in the absence of DNA. The sequence is that of Major DNA-binding protein from Epstein-Barr virus (strain GD1) (HHV-4).